Reading from the N-terminus, the 962-residue chain is AP2-associated protein kinase 1 (962 aa).

Residue Met-1 is modified to N-acetylmethionine. Residues 1-11 show a composition bias toward basic and acidic residues; sequence MKKFFDSRREQ. Residues 1 to 27 are disordered; it reads MKKFFDSRREQGSSGLGSGSSGGGGSS. Ser-14 carries the post-translational modification Phosphoserine. The span at 14 to 27 shows a compositional bias: gly residues; sequence SGLGSGSSGGGGSS. Residues 46–314 form the Protein kinase domain; it reads VTVDEVLAEG…QVSYFSFKLL (269 aa). Residues 52–60 and Lys-74 each bind ATP; that span reads LAEGGFALV. Catalysis depends on Asp-176, which acts as the Proton acceptor. Tyr-234 carries the phosphotyrosine modification. A Phosphoserine modification is found at Ser-235. Disordered regions lie at residues 325-515 and 576-633; these read NSPI…QFQA and PQAQ…RAGH. Phosphothreonine occurs at positions 353 and 388. Arg-390 is modified (omega-N-methylarginine). A compositionally biased stretch (polar residues) spans 397–418; the sequence is PLPQATGPSNQPSLLASVSQPK. The segment covering 419 to 434 has biased composition (low complexity); that stretch reads AQATPSQPLQSSQPKQ. Over residues 435 to 444 the composition is skewed to pro residues; the sequence is PQAPPTPQQT. Thr-440 carries the phosphothreonine modification. Low complexity-rich tracts occupy residues 445-485, 498-514, and 576-606; these read PAPQ…QPQQ, QQQQ…QQFQ, and PQAQ…KVQT. Thr-607 is modified (phosphothreonine). Residues 614–628 show a composition bias toward polar residues; the sequence is GQKVGSLTPPSSPKT. The residue at position 619 (Ser-619) is a Phosphoserine. The residue at position 621 (Thr-621) is a Phosphothreonine. Phosphoserine is present on residues Ser-624, Ser-625, Ser-638, and Ser-651. Thr-654 is subject to Phosphothreonine. Positions 664–677 are enriched in low complexity; the sequence is ASLSKSKSATTTPS. The tract at residues 664–702 is disordered; the sequence is ASLSKSKSATTTPSGSPRTSQQNVSNASEGSTWNPFDDD. Polar residues predominate over residues 678-697; sequence GSPRTSQQNVSNASEGSTWN. Residues Ser-732, Ser-847, Ser-938, and Ser-939 each carry the phosphoserine modification. The segment at 824–961 is clathrin-binding domain (CBD); it reads EKADAAVESL…SLLLVDQLID (138 aa). Disordered regions lie at residues 839-860 and 925-946; these read PPVA…TDSL and LITK…ESSL. Polar residues predominate over residues 846–860; the sequence is PSHTESVTSNRTDSL. Over residues 932 to 945 the composition is skewed to low complexity; it reads GGHSRNSSGSSESS.

This sequence belongs to the protein kinase superfamily. Ser/Thr protein kinase family. In terms of assembly, interacts (via CBD domain) with clathrin. Interacts with AP-2 complex. Interacts with NUMB. Interacts with alpha-adaptin. Interacts with EPS15. Interacts with membrane-bound activated NOTCH1 but not with the inactive full-length form of NOTCH1. Preferentially interacts with monoubiquitinated activated NOTCH1 compared to the non-ubiquitinated form. In terms of processing, autophosphorylated.

It localises to the cell membrane. Its subcellular location is the membrane. The protein localises to the clathrin-coated pit. The protein resides in the presynapse. It carries out the reaction L-seryl-[protein] + ATP = O-phospho-L-seryl-[protein] + ADP + H(+). The enzyme catalyses L-threonyl-[protein] + ATP = O-phospho-L-threonyl-[protein] + ADP + H(+). Stimulated by clathrin. Regulates clathrin-mediated endocytosis by phosphorylating the AP2M1/mu2 subunit of the adaptor protein complex 2 (AP-2) which ensures high affinity binding of AP-2 to cargo membrane proteins during the initial stages of endocytosis. Preferentially, may phosphorylate substrates on threonine residues. Regulates phosphorylation of other AP-2 subunits as well as AP-2 localization and AP-2-mediated internalization of ligand complexes. Phosphorylates NUMB and regulates its cellular localization, promoting NUMB localization to endosomes. Binds to and stabilizes the activated form of NOTCH1, increases its localization in endosomes and regulates its transcriptional activity. This is AP2-associated protein kinase 1 (Aak1) from Rattus norvegicus (Rat).